The chain runs to 447 residues: Elongation factor 1-alpha (447 aa).

Positions lysine 5–serine 230 constitute a tr-type G domain. The segment at glycine 14 to serine 21 is G1. Position 14–21 (glycine 14–serine 21) interacts with GTP. Lysine 55 bears the N6,N6-dimethyllysine mark. A G2 region spans residues glycine 70 to aspartate 74. Lysine 79 carries the post-translational modification N6,N6,N6-trimethyllysine. Residues aspartate 91–glycine 94 form a G3 region. Residues aspartate 91 to histidine 95 and asparagine 153 to aspartate 156 each bind GTP. The interval asparagine 153–aspartate 156 is G4. An N6,N6,N6-trimethyllysine modification is found at lysine 187. A G5 region spans residues serine 194–phenylalanine 196. At lysine 261 the chain carries N6-methyllysine. A 5-glutamyl glycerylphosphorylethanolamine modification is found at glutamate 289. An N6,N6,N6-trimethyllysine modification is found at lysine 306. The residue at position 362 (glutamate 362) is a 5-glutamyl glycerylphosphorylethanolamine. Residue lysine 396 is modified to N6,N6,N6-trimethyllysine.

Belongs to the TRAFAC class translation factor GTPase superfamily. Classic translation factor GTPase family. EF-Tu/EF-1A subfamily.

The protein resides in the cytoplasm. In terms of biological role, this protein promotes the GTP-dependent binding of aminoacyl-tRNA to the A-site of ribosomes during protein biosynthesis. The chain is Elongation factor 1-alpha from Daucus carota (Wild carrot).